The primary structure comprises 319 residues: Lipoyl synthase (319 aa).

Residues 1–24 (MAVVIDTVGARPRHPEKQANPDTP) are disordered. Positions 13 to 24 (RHPEKQANPDTP) are enriched in basic and acidic residues. Residues Cys-58, Cys-63, Cys-69, Cys-84, Cys-88, Cys-91, and Ser-298 each contribute to the [4Fe-4S] cluster site. A Radical SAM core domain is found at 70–287 (WDKSHATFMI…EEIARAKGFL (218 aa)).

This sequence belongs to the radical SAM superfamily. Lipoyl synthase family. It depends on [4Fe-4S] cluster as a cofactor.

It localises to the cytoplasm. The enzyme catalyses [[Fe-S] cluster scaffold protein carrying a second [4Fe-4S](2+) cluster] + N(6)-octanoyl-L-lysyl-[protein] + 2 oxidized [2Fe-2S]-[ferredoxin] + 2 S-adenosyl-L-methionine + 4 H(+) = [[Fe-S] cluster scaffold protein] + N(6)-[(R)-dihydrolipoyl]-L-lysyl-[protein] + 4 Fe(3+) + 2 hydrogen sulfide + 2 5'-deoxyadenosine + 2 L-methionine + 2 reduced [2Fe-2S]-[ferredoxin]. The protein operates within protein modification; protein lipoylation via endogenous pathway; protein N(6)-(lipoyl)lysine from octanoyl-[acyl-carrier-protein]: step 2/2. Its function is as follows. Catalyzes the radical-mediated insertion of two sulfur atoms into the C-6 and C-8 positions of the octanoyl moiety bound to the lipoyl domains of lipoate-dependent enzymes, thereby converting the octanoylated domains into lipoylated derivatives. The chain is Lipoyl synthase from Phenylobacterium zucineum (strain HLK1).